The primary structure comprises 293 residues: Ribosomal RNA small subunit methyltransferase A (293 aa).

Residues asparagine 29, leucine 31, glycine 56, glutamate 77, aspartate 102, and asparagine 127 each contribute to the S-adenosyl-L-methionine site.

It belongs to the class I-like SAM-binding methyltransferase superfamily. rRNA adenine N(6)-methyltransferase family. RsmA subfamily.

Its subcellular location is the cytoplasm. The enzyme catalyses adenosine(1518)/adenosine(1519) in 16S rRNA + 4 S-adenosyl-L-methionine = N(6)-dimethyladenosine(1518)/N(6)-dimethyladenosine(1519) in 16S rRNA + 4 S-adenosyl-L-homocysteine + 4 H(+). Specifically dimethylates two adjacent adenosines (A1518 and A1519) in the loop of a conserved hairpin near the 3'-end of 16S rRNA in the 30S particle. May play a critical role in biogenesis of 30S subunits. The chain is Ribosomal RNA small subunit methyltransferase A from Geobacillus thermodenitrificans (strain NG80-2).